A 420-amino-acid chain; its full sequence is Ribulose bisphosphate carboxylase (420 aa).

Lysine 155 acts as the Proton acceptor in catalysis. Substrate is bound at residue lysine 157. Lysine 181, aspartate 183, and glutamate 184 together coordinate Mg(2+). Residue lysine 181 is modified to N6-carboxylysine. The Proton acceptor role is filled by histidine 273. Substrate-binding positions include arginine 274, histidine 306, 343-345, and 365-368; these read SGG and QAGG.

The protein belongs to the RuBisCO large chain family. Type III subfamily. In terms of assembly, homodimer or homodecamer. In contrast to form I RuBisCO, the form III RuBisCO is composed solely of large subunits. It depends on Mg(2+) as a cofactor.

It carries out the reaction 2 (2R)-3-phosphoglycerate + 2 H(+) = D-ribulose 1,5-bisphosphate + CO2 + H2O. The catalysed reaction is D-ribulose 1,5-bisphosphate + O2 = 2-phosphoglycolate + (2R)-3-phosphoglycerate + 2 H(+). Functionally, catalyzes the addition of molecular CO(2) and H(2)O to ribulose 1,5-bisphosphate (RuBP), generating two molecules of 3-phosphoglycerate (3-PGA). Functions in an archaeal AMP degradation pathway, together with AMP phosphorylase and R15P isomerase. The polypeptide is Ribulose bisphosphate carboxylase (Pyrococcus furiosus (strain ATCC 43587 / DSM 3638 / JCM 8422 / Vc1)).